Here is a 455-residue protein sequence, read N- to C-terminus: UDP-N-acetylmuramate--L-alanine ligase (455 aa).

Position 109-115 (109-115) interacts with ATP; sequence GTHGKTT.

It belongs to the MurCDEF family.

The protein resides in the cytoplasm. It catalyses the reaction UDP-N-acetyl-alpha-D-muramate + L-alanine + ATP = UDP-N-acetyl-alpha-D-muramoyl-L-alanine + ADP + phosphate + H(+). Its pathway is cell wall biogenesis; peptidoglycan biosynthesis. Cell wall formation. This Caldicellulosiruptor saccharolyticus (strain ATCC 43494 / DSM 8903 / Tp8T 6331) protein is UDP-N-acetylmuramate--L-alanine ligase.